A 630-amino-acid chain; its full sequence is Replication protein A 70 kDa DNA-binding subunit B (630 aa).

A DNA-binding region (OB) is located at residues 200–282 (IIKVRVTSKG…KTVHNDYEMT (83 aa)). The C4-type zinc-finger motif lies at 496–516 (CKTCNKKVTEAIGSGYWCEGC).

This sequence belongs to the replication factor A protein 1 family. As to quaternary structure, heterotrimer of RPA1, RPA2 and RPA3 (canonical replication protein A complex). Interacts with RPA2A. As to expression, expressed in root tips, roots, shoot apical meristem (SAM) and young leaves, and at lower levels in mature leaves, flag leaves and ears.

It is found in the nucleus. Its function is as follows. Component of the replication protein A complex (RPA) required for DNA recombination, repair and replication. The activity of RPA is mediated by single-stranded DNA binding and protein interactions. Probably involved in repair of double-strand DNA breaks (DSBs) induced by genotoxic stresses. The polypeptide is Replication protein A 70 kDa DNA-binding subunit B (RPA1B) (Oryza sativa subsp. japonica (Rice)).